Consider the following 77-residue polypeptide: MKQVDCIGLYCPEPVFRARKAMEESEVGEIIEILADDPAAESDIPVLVKKLGQELVEFEKLEDGVLRFVVKIVKEVR.

The Cysteine persulfide intermediate role is filled by cysteine 11.

It belongs to the sulfur carrier protein TusA family.

In Archaeoglobus fulgidus (strain ATCC 49558 / DSM 4304 / JCM 9628 / NBRC 100126 / VC-16), this protein is Putative sulfur carrier protein AF_0188.